The chain runs to 90 residues: Small ribosomal subunit protein uS15 (90 aa).

Belongs to the universal ribosomal protein uS15 family. Part of the 30S ribosomal subunit. Forms a bridge to the 50S subunit in the 70S ribosome, contacting the 23S rRNA.

In terms of biological role, one of the primary rRNA binding proteins, it binds directly to 16S rRNA where it helps nucleate assembly of the platform of the 30S subunit by binding and bridging several RNA helices of the 16S rRNA. Forms an intersubunit bridge (bridge B4) with the 23S rRNA of the 50S subunit in the ribosome. The protein is Small ribosomal subunit protein uS15 of Campylobacter hominis (strain ATCC BAA-381 / DSM 21671 / CCUG 45161 / LMG 19568 / NCTC 13146 / CH001A).